The primary structure comprises 545 residues: MTTNYIFVTGGVVSSLGKGIAAASLAAILEARGLNVTIMKLDPYINVDPGTMSPIQHGEVFVTEDGAETDLDLGHYERFIRTKMSRRNNFTTGRIYSDVLRKERRGDYLGATVQVIPHITNAIKERVLEGGEGHDVVLVEIGGTVGDIESLPFLEAIRQLAVDIGREHALFMHLTLVPYLAAAGEVKTKPTQHSVKELLSIGIQPDILICRSDRAVPANERAKIALFCNVPEKAVISMKDVDSIYKIPGLLKSQGLDDYICKRFSLNCPEANLSEWEQVIYEEANPAGEVTIGMVGKYIELPDAYKSVIEALKHGGLKNRVTVNIKLIDSQDVETRGVEILKDLDAILIPGGFGYRGVEGKIATARYARENNIPYLGICLGMQVALIEFARNVAGMDNANSTEFVPDCKYPVVALITEWRDEDGNVEVRSEKSDLGGTMRLGAQQCQLSDDSLVRQLYGAPTIVERHRHRYEVNNMLLKQIEAAGLRVAGRSGDDQLVEIIEVPNHPWFVACQFHPEFTSTPRDGHPLFAGFVKAANEHQKRQAK.

Residues 1-266 (MTTNYIFVTG…DDYICKRFSL (266 aa)) are amidoligase domain. S14 provides a ligand contact to CTP. A UTP-binding site is contributed by S14. Residues 15 to 20 (SLGKGI) and D72 each bind ATP. Residues D72 and E140 each contribute to the Mg(2+) site. Residues 147 to 149 (DIE), 187 to 192 (KTKPTQ), and K223 each bind CTP. UTP-binding positions include 187–192 (KTKPTQ) and K223. 239–241 (KDV) is a binding site for ATP. The Glutamine amidotransferase type-1 domain occupies 291–542 (TIGMVGKYIE…VKAANEHQKR (252 aa)). G352 is an L-glutamine binding site. C379 functions as the Nucleophile; for glutamine hydrolysis in the catalytic mechanism. L-glutamine contacts are provided by residues 380–383 (LGMQ), E403, and R470. Residues H515 and E517 contribute to the active site.

Belongs to the CTP synthase family. As to quaternary structure, homotetramer.

The enzyme catalyses UTP + L-glutamine + ATP + H2O = CTP + L-glutamate + ADP + phosphate + 2 H(+). The catalysed reaction is L-glutamine + H2O = L-glutamate + NH4(+). It carries out the reaction UTP + NH4(+) + ATP = CTP + ADP + phosphate + 2 H(+). It functions in the pathway pyrimidine metabolism; CTP biosynthesis via de novo pathway; CTP from UDP: step 2/2. Its activity is regulated as follows. Allosterically activated by GTP, when glutamine is the substrate; GTP has no effect on the reaction when ammonia is the substrate. The allosteric effector GTP functions by stabilizing the protein conformation that binds the tetrahedral intermediate(s) formed during glutamine hydrolysis. Inhibited by the product CTP, via allosteric rather than competitive inhibition. Functionally, catalyzes the ATP-dependent amination of UTP to CTP with either L-glutamine or ammonia as the source of nitrogen. Regulates intracellular CTP levels through interactions with the four ribonucleotide triphosphates. This chain is CTP synthase, found in Salmonella paratyphi A (strain ATCC 9150 / SARB42).